A 613-amino-acid chain; its full sequence is MSEQFTRREFLQSACITMGALAVSTSGVDRAFASSSLPINTSGIPSCDVLIIGSGAAGLRAAVAARKKDPSLNVIVVSKVMPTRSATTMAEGGINGVIDFSEGDSFALHAYDTVKGGDFLVDQDTAMKFAEHAGEAIHELDYIGMPFSRDKNGKVDKRYAGGASKIRCNFSADKTGHILTHTCLDDALKNGVKFLMDHQLLDIGVDNGRCEGVVLRDIRTGTIAPVRAKSVVLATGGYTRVFWNRTSTPYIATGDGAASAMRAGVAFKDPEMLQFHPTGVCHGGVLITEAARGEGGILLNNQGERFMKNYAKKMELAPRDIVSRSIETEIREGRAFGKGMEAYVLLDVTHLGKEKIMRNLPQIRHIGLLFENMDLVEKPIAIRPTAHYSMGGIDVMGLESMSTAIPGLFAAGEAACVSIHGANRLGGNSLCDTVVTGKIAGTNAASFASSAGFGSGTHLHDLTLKWMSRFKEVANGKGEVNEMYAIREELGAVNWDNMGVFRTESRLVALEDKHNELQARYDALRIPNTNPVFNTAFTEYVELGNILLASRAARMGAEARKESRGSHYREDYIKRDDANFLKHSMVTMDSNGKLHLGWKDVVVTQFKIEERKY.

Positions 1 to 33 form a signal peptide, tat-type signal; the sequence is MSEQFTRREFLQSACITMGALAVSTSGVDRAFA. Residues 53–58, 78–93, and aspartate 255 each bind FAD; these read GSGAAG and SKVM…AEGG. Histidine 276 and threonine 288 together coordinate substrate. Catalysis depends on arginine 319, which acts as the Proton acceptor. Residue histidine 387 coordinates substrate. Residue glutamate 413 coordinates FAD. Arginine 424 contributes to the substrate binding site. 429–430 is an FAD binding site; sequence SL.

This sequence belongs to the FAD-dependent oxidoreductase 2 family. FRD/SDH subfamily. In terms of assembly, the MFR complex is composed of three subunits: a flavoprotein (SdhA), an iron-sulfur protein (SdhB), and one hydrophobic anchor protein (SdhE). FAD is required as a cofactor. In terms of processing, predicted to be exported by the Tat system. The position of the signal peptide cleavage has not been experimentally proven.

It is found in the periplasm. It localises to the cell membrane. The enzyme catalyses 8-methylmenaquinone-6 + succinate = 8-methylmenaquinol-6 + fumarate. Flavoprotein subunit of 8-methylmenaquinol:fumarate reductase (MFR), that catalyzes the reduction of fumarate using 8-methylmenaquinol-6 as electron donor. The complex shows no succinate oxidation activity. Is involved in anaerobic metabolism. SdhA contains the dicarboxylate reduction site. The protein is 8-methylmenaquinol:fumarate reductase flavoprotein subunit of Wolinella succinogenes (strain ATCC 29543 / DSM 1740 / CCUG 13145 / JCM 31913 / LMG 7466 / NCTC 11488 / FDC 602W) (Vibrio succinogenes).